The primary structure comprises 254 residues: Alcohol dehydrogenase (254 aa).

Residue 10 to 33 (FVAGLGGIGLDTSREIVKSGPKNL) participates in NAD(+) binding. Position 138 (Ser-138) interacts with substrate. The active-site Proton acceptor is the Tyr-151.

Belongs to the short-chain dehydrogenases/reductases (SDR) family. As to quaternary structure, homodimer.

It catalyses the reaction a primary alcohol + NAD(+) = an aldehyde + NADH + H(+). It carries out the reaction a secondary alcohol + NAD(+) = a ketone + NADH + H(+). In Drosophila adiastola (Fruit fly), this protein is Alcohol dehydrogenase (Adh).